A 240-amino-acid chain; its full sequence is Methylthioribulose-1-phosphate dehydratase (240 aa).

Residue Cys-99 participates in substrate binding. Residues His-116 and His-118 each contribute to the Zn(2+) site. Glu-145 serves as the catalytic Proton donor/acceptor. His-201 lines the Zn(2+) pocket.

Belongs to the aldolase class II family. MtnB subfamily. Requires Zn(2+) as cofactor.

It localises to the cytoplasm. The enzyme catalyses 5-(methylsulfanyl)-D-ribulose 1-phosphate = 5-methylsulfanyl-2,3-dioxopentyl phosphate + H2O. It participates in amino-acid biosynthesis; L-methionine biosynthesis via salvage pathway; L-methionine from S-methyl-5-thio-alpha-D-ribose 1-phosphate: step 2/6. Functionally, catalyzes the dehydration of methylthioribulose-1-phosphate (MTRu-1-P) into 2,3-diketo-5-methylthiopentyl-1-phosphate (DK-MTP-1-P). The protein is Methylthioribulose-1-phosphate dehydratase of Ajellomyces capsulatus (strain H143) (Darling's disease fungus).